Here is a 304-residue protein sequence, read N- to C-terminus: Homoserine kinase (304 aa).

86–96 (PLARGLGSSAA) contacts ATP.

Belongs to the GHMP kinase family. Homoserine kinase subfamily.

It is found in the cytoplasm. The enzyme catalyses L-homoserine + ATP = O-phospho-L-homoserine + ADP + H(+). It functions in the pathway amino-acid biosynthesis; L-threonine biosynthesis; L-threonine from L-aspartate: step 4/5. Its function is as follows. Catalyzes the ATP-dependent phosphorylation of L-homoserine to L-homoserine phosphate. This Carboxydothermus hydrogenoformans (strain ATCC BAA-161 / DSM 6008 / Z-2901) protein is Homoserine kinase.